The sequence spans 554 residues: Trichloroethene reductive dehalogenase (554 aa).

Residues Met1 to Phe42 constitute a signal peptide (tat-type signal). 4Fe-4S ferredoxin-type domains follow at residues Pro425 to Pro457 and Glu471 to Trp500. Residues Cys437, Cys440, Cys443, Cys447, Cys480, Cys483, Cys486, and Cys490 each contribute to the [4Fe-4S] cluster site.

The protein belongs to the PceA family. [4Fe-4S] cluster serves as cofactor. Requires corrinoid as cofactor. Predicted to be exported by the Tat system. The position of the signal peptide cleavage has been experimentally proven.

The protein resides in the cell membrane. The catalysed reaction is trichloroethene + AH2 = (Z)-1,2-dichloroethene + chloride + A + H(+). The enzyme catalyses (Z)-1,2-dichloroethene + AH2 = chloroethene + chloride + A + H(+). It catalyses the reaction 1,1-dichloroethene + AH2 = chloroethene + chloride + A + H(+). Loses 93% of its activity upon incubation with 1-iodopropane and titanium(III) citrate in the dark. Subsequent exposure to light restores 80% of the original activity. Completely inhibited by 2 mM sodium sulfite or sodium dithionite, and by 1 mM cuprous chloride. Functionally, catalyzes the reductive dechlorination of trichloroethene (TCE) to cis-1,2-dichloroethene (DCE) and of cis-1,2-dichloroethene to chloroethene. The substrate specificity is broad, and the enzyme can dehalogenate various substrates, including 1,1-dichloroethene (1,1-DCE), 1,2-dichloroethane and 1,2-dibromoethane. A variety of other haloalkanes and haloalkenes containing three to five carbon atoms are dehalogenated at lower rates. Trans-1,2-dichloroethene (trans-DCE) and chloroethene are degraded at rates which are approximately 2 orders of magnitude lower. Titanium(III) citrate and methyl viologen can be used as reductants. The chain is Trichloroethene reductive dehalogenase from Dehalococcoides mccartyi (strain ATCC BAA-2266 / KCTC 15142 / 195) (Dehalococcoides ethenogenes (strain 195)).